We begin with the raw amino-acid sequence, 717 residues long: Fatty acid oxidation complex subunit alpha (717 aa).

An enoyl-CoA hydratase/isomerase region spans residues 1 to 189; it reads MIYQSPTIEV…KVGAIDAVVA (189 aa). D296 contributes to the substrate binding site. A 3-hydroxyacyl-CoA dehydrogenase region spans residues 311–717; the sequence is KKVNSAAVLG…ANNGSYYQQA (407 aa). Residues M324, D343, 400-402, K407, and S429 each bind NAD(+); that span reads VVE. The active-site For 3-hydroxyacyl-CoA dehydrogenase activity is the H450. Residue N453 participates in NAD(+) binding. Residues N500 and Y660 each coordinate substrate.

It in the N-terminal section; belongs to the enoyl-CoA hydratase/isomerase family. This sequence in the C-terminal section; belongs to the 3-hydroxyacyl-CoA dehydrogenase family. Heterotetramer of two alpha chains (FadB) and two beta chains (FadA).

It carries out the reaction a (3S)-3-hydroxyacyl-CoA + NAD(+) = a 3-oxoacyl-CoA + NADH + H(+). The catalysed reaction is a (3S)-3-hydroxyacyl-CoA = a (2E)-enoyl-CoA + H2O. It catalyses the reaction a 4-saturated-(3S)-3-hydroxyacyl-CoA = a (3E)-enoyl-CoA + H2O. The enzyme catalyses (3S)-3-hydroxybutanoyl-CoA = (3R)-3-hydroxybutanoyl-CoA. It carries out the reaction a (3Z)-enoyl-CoA = a 4-saturated (2E)-enoyl-CoA. The catalysed reaction is a (3E)-enoyl-CoA = a 4-saturated (2E)-enoyl-CoA. The protein operates within lipid metabolism; fatty acid beta-oxidation. Involved in the aerobic and anaerobic degradation of long-chain fatty acids via beta-oxidation cycle. Catalyzes the formation of 3-oxoacyl-CoA from enoyl-CoA via L-3-hydroxyacyl-CoA. It can also use D-3-hydroxyacyl-CoA and cis-3-enoyl-CoA as substrate. The sequence is that of Fatty acid oxidation complex subunit alpha from Shewanella halifaxensis (strain HAW-EB4).